Consider the following 425-residue polypeptide: Serine--tRNA ligase (425 aa).

Position 233-235 (233-235 (TAE)) interacts with L-serine. 264–266 (RAE) contributes to the ATP binding site. Glutamate 287 serves as a coordination point for L-serine. 351-354 (EISS) contacts ATP. Position 387 (serine 387) interacts with L-serine.

It belongs to the class-II aminoacyl-tRNA synthetase family. Type-1 seryl-tRNA synthetase subfamily. As to quaternary structure, homodimer. The tRNA molecule binds across the dimer.

It is found in the cytoplasm. The catalysed reaction is tRNA(Ser) + L-serine + ATP = L-seryl-tRNA(Ser) + AMP + diphosphate + H(+). It catalyses the reaction tRNA(Sec) + L-serine + ATP = L-seryl-tRNA(Sec) + AMP + diphosphate + H(+). It functions in the pathway aminoacyl-tRNA biosynthesis; selenocysteinyl-tRNA(Sec) biosynthesis; L-seryl-tRNA(Sec) from L-serine and tRNA(Sec): step 1/1. In terms of biological role, catalyzes the attachment of serine to tRNA(Ser). Is also able to aminoacylate tRNA(Sec) with serine, to form the misacylated tRNA L-seryl-tRNA(Sec), which will be further converted into selenocysteinyl-tRNA(Sec). This is Serine--tRNA ligase from Clostridium botulinum (strain Alaska E43 / Type E3).